A 120-amino-acid chain; its full sequence is Cell cycle protein GpsB (120 aa).

The stretch at Leu-32–Ala-68 forms a coiled coil. A disordered region spans residues Lys-63 to Ser-88. The span at Ala-68–Val-86 shows a compositional bias: low complexity.

Belongs to the GpsB family. Forms polymers through the coiled coil domains. Interacts with PBP1, MreC and EzrA.

It is found in the cytoplasm. Functionally, divisome component that associates with the complex late in its assembly, after the Z-ring is formed, and is dependent on DivIC and PBP2B for its recruitment to the divisome. Together with EzrA, is a key component of the system that regulates PBP1 localization during cell cycle progression. Its main role could be the removal of PBP1 from the cell pole after pole maturation is completed. Also contributes to the recruitment of PBP1 to the division complex. Not essential for septum formation. In Streptococcus sanguinis (strain SK36), this protein is Cell cycle protein GpsB.